Here is a 485-residue protein sequence, read N- to C-terminus: Zinc finger protein 639 (485 aa).

Residues 1–14 (MNEYPKKRKRKTLH) show a composition bias toward basic residues. A disordered region spans residues 1 to 20 (MNEYPKKRKRKTLHPSRYSD). S60 carries the phosphoserine modification. K76 is covalently cross-linked (Glycyl lysine isopeptide (Lys-Gly) (interchain with G-Cter in SUMO2)). S88 carries the post-translational modification Phosphoserine. Glycyl lysine isopeptide (Lys-Gly) (interchain with G-Cter in SUMO2) cross-links involve residues K177, K181, and K226. 8 C2H2-type zinc fingers span residues 204–227 (YKCE…ILKH), 233–255 (NVCR…AKLH), 260–283 (YICK…ADTH), 289–311 (YWCE…FQEH), 374–397 (FVCQ…AIEH), 403–425 (HVCD…LNSH), 431–454 (YLCQ…DFKH), and 460–482 (HKCS…LPVH). An interaction with CTNNA2 region spans residues 371–455 (KNFFVCQVCG…LKIHLDFKHS (85 aa)).

The protein belongs to the krueppel C2H2-type zinc-finger protein family. In terms of assembly, interacts with CTNNA2.

It is found in the nucleus. Functionally, binds DNA and may function as a transcriptional repressor. This is Zinc finger protein 639 (ZNF639) from Homo sapiens (Human).